We begin with the raw amino-acid sequence, 96 residues long: Large ribosomal subunit protein eL21 (96 aa).

The protein belongs to the eukaryotic ribosomal protein eL21 family.

The protein is Large ribosomal subunit protein eL21 of Methanothrix thermoacetophila (strain DSM 6194 / JCM 14653 / NBRC 101360 / PT) (Methanosaeta thermophila).